The sequence spans 118 residues: Immunoglobulin heavy variable 4-31 (118 aa).

The signal sequence occupies residues 1–19 (MKHLWFFLLLVAAPRWVLS). Residues 20–44 (QVQLQESGPGLVKPSQTLSLTCTVS) are framework-1. Residues 20–118 (QVQLQESGPG…ADTAVYYCAR (99 aa)) form the Ig-like domain. Cys41 and Cys116 form a disulfide bridge. A complementarity-determining-1 region spans residues 45 to 54 (GGSISSGGYY). Positions 55–71 (WSWIRQHPGKGLEWIGY) are framework-2. The interval 72 to 78 (IYYSGST) is complementarity-determining-2. Positions 79 to 116 (YYNPSLKSLVTISVDTSKNQFSLKLSSVTAADTAVYYC) are framework-3. Positions 117–118 (AR) are complementarity-determining-3.

As to quaternary structure, immunoglobulins are composed of two identical heavy chains and two identical light chains; disulfide-linked.

The protein localises to the secreted. It localises to the cell membrane. In terms of biological role, v region of the variable domain of immunoglobulin heavy chains that participates in the antigen recognition. Immunoglobulins, also known as antibodies, are membrane-bound or secreted glycoproteins produced by B lymphocytes. In the recognition phase of humoral immunity, the membrane-bound immunoglobulins serve as receptors which, upon binding of a specific antigen, trigger the clonal expansion and differentiation of B lymphocytes into immunoglobulins-secreting plasma cells. Secreted immunoglobulins mediate the effector phase of humoral immunity, which results in the elimination of bound antigens. The antigen binding site is formed by the variable domain of one heavy chain, together with that of its associated light chain. Thus, each immunoglobulin has two antigen binding sites with remarkable affinity for a particular antigen. The variable domains are assembled by a process called V-(D)-J rearrangement and can then be subjected to somatic hypermutations which, after exposure to antigen and selection, allow affinity maturation for a particular antigen. This chain is Immunoglobulin heavy variable 4-31, found in Homo sapiens (Human).